A 210-amino-acid chain; its full sequence is ATP-dependent Clp protease proteolytic subunit (210 aa).

The Nucleophile role is filled by S106. H131 is an active-site residue.

Belongs to the peptidase S14 family. As to quaternary structure, fourteen ClpP subunits assemble into 2 heptameric rings which stack back to back to give a disk-like structure with a central cavity, resembling the structure of eukaryotic proteasomes.

It localises to the cytoplasm. It catalyses the reaction Hydrolysis of proteins to small peptides in the presence of ATP and magnesium. alpha-casein is the usual test substrate. In the absence of ATP, only oligopeptides shorter than five residues are hydrolyzed (such as succinyl-Leu-Tyr-|-NHMec, and Leu-Tyr-Leu-|-Tyr-Trp, in which cleavage of the -Tyr-|-Leu- and -Tyr-|-Trp bonds also occurs).. In terms of biological role, cleaves peptides in various proteins in a process that requires ATP hydrolysis. Has a chymotrypsin-like activity. Plays a major role in the degradation of misfolded proteins. The chain is ATP-dependent Clp protease proteolytic subunit from Rhodopseudomonas palustris (strain BisB18).